The sequence spans 338 residues: Mas-related G-protein coupled receptor member B2 (338 aa).

Topologically, residues 1–40 (MSGDFLIKNLSTSAWKTNITVLNGSYYIDTSVCVTRNQAM) are extracellular. N-linked (GlcNAc...) asparagine glycans are attached at residues N9, N18, and N23. The helical transmembrane segment at 41 to 61 (ILLSIIISLVGMGLNAIVLWF) threads the bilayer. At 62–89 (LGIRMHTNAFTVYILNLAMADFLYLCSQ) the chain is on the cytoplasmic side. The helical transmembrane segment at 90-110 (FVICLLIAFYIFYSIDINIPL) threads the bilayer. A topological domain (extracellular) is located at residue V111. Residues 112–132 (LYVVPIFAYLSGLSILSTISI) form a helical membrane-spanning segment. At 133-157 (ERCLSVIWPIWYRCKRPRHTSAITC) the chain is on the cytoplasmic side. Residues 158 to 178 (FVLWVMSLLLGLLEGKACGLL) form a helical membrane-spanning segment. Residues 179–191 (FNSFDSYWCETFD) are Extracellular-facing. A helical transmembrane segment spans residues 192–212 (VITNIWSVVFFGVLCGSSLTL). Residues 213–231 (LVRIFCGSQRIPMTRLYVT) are Cytoplasmic-facing. The chain crosses the membrane as a helical span at residues 232-252 (ITLTVLVFLIFGLPFGIYWIL). Residues 253 to 268 (YQWISNFYYVEICNFY) are Extracellular-facing. The chain crosses the membrane as a helical span at residues 269-289 (LEILFLSCVNSCMNPIIYFLV). At 290-338 (GSIRHRRFRRKTLKLLLQRAMQDTPEEEQSGNKSSSEHPEELETVQSCS) the chain is on the cytoplasmic side. The segment at 310–338 (MQDTPEEEQSGNKSSSEHPEELETVQSCS) is disordered.

This sequence belongs to the G-protein coupled receptor 1 family. Mas subfamily. In terms of tissue distribution, mast cell-specific.

It is found in the cell membrane. Functionally, mast cell-specific receptor for basic secretagogues, i.e. cationic amphiphilic drugs, as well as endo- or exogenous peptides, consisting of a basic head group and a hydrophobic core. Recognizes and binds small molecules containing a cyclized tetrahydroisoquinoline (THIQ), such as non-steroidal neuromuscular blocking drugs (NMBDs), including tubocurarine and atracurium. In response to these compounds, mediates pseudo-allergic reactions characterized by histamine release, inflammation and airway contraction. This chain is Mas-related G-protein coupled receptor member B2 (Mrgprb2), found in Mus musculus (Mouse).